Reading from the N-terminus, the 347-residue chain is NADH-ubiquinone oxidoreductase chain 2 (347 aa).

10 helical membrane passes run 1-21 (MNPL…AIVA), 25-45 (HWLM…PILM), 59-79 (YFLT…MNLV), 111-131 (FHFW…LILL), 149-169 (INLD…GWGG), 178-198 (IMAY…TYNP), 201-221 (TLLN…MFML), 237-257 (MPLL…LPPL), 274-294 (NSVI…YFYM), and 326-346 (LSPL…LALL).

The protein belongs to the complex I subunit 2 family. In terms of assembly, core subunit of respiratory chain NADH dehydrogenase (Complex I) which is composed of 45 different subunits. Interacts with TMEM242.

Its subcellular location is the mitochondrion inner membrane. It catalyses the reaction a ubiquinone + NADH + 5 H(+)(in) = a ubiquinol + NAD(+) + 4 H(+)(out). In terms of biological role, core subunit of the mitochondrial membrane respiratory chain NADH dehydrogenase (Complex I) which catalyzes electron transfer from NADH through the respiratory chain, using ubiquinone as an electron acceptor. Essential for the catalytic activity and assembly of complex I. The protein is NADH-ubiquinone oxidoreductase chain 2 of Pteropus rodricensis (Rodriguez flying fox).